Reading from the N-terminus, the 156-residue chain is 6,7-dimethyl-8-ribityllumazine synthase (156 aa).

5-amino-6-(D-ribitylamino)uracil is bound by residues Phe-22, 57 to 59, and 81 to 83; these read AYE and TVI. 86-87 is a (2S)-2-hydroxy-3-oxobutyl phosphate binding site; that stretch reads GT. The Proton donor role is filled by His-89. Phe-114 is a 5-amino-6-(D-ribitylamino)uracil binding site. Arg-128 contributes to the (2S)-2-hydroxy-3-oxobutyl phosphate binding site.

This sequence belongs to the DMRL synthase family. Forms an icosahedral capsid composed of 60 subunits, arranged as a dodecamer of pentamers.

It catalyses the reaction (2S)-2-hydroxy-3-oxobutyl phosphate + 5-amino-6-(D-ribitylamino)uracil = 6,7-dimethyl-8-(1-D-ribityl)lumazine + phosphate + 2 H2O + H(+). It functions in the pathway cofactor biosynthesis; riboflavin biosynthesis; riboflavin from 2-hydroxy-3-oxobutyl phosphate and 5-amino-6-(D-ribitylamino)uracil: step 1/2. Catalyzes the formation of 6,7-dimethyl-8-ribityllumazine by condensation of 5-amino-6-(D-ribitylamino)uracil with 3,4-dihydroxy-2-butanone 4-phosphate. This is the penultimate step in the biosynthesis of riboflavin. The protein is 6,7-dimethyl-8-ribityllumazine synthase of Escherichia coli O45:K1 (strain S88 / ExPEC).